The chain runs to 645 residues: Threonine--tRNA ligase (645 aa).

The 63-residue stretch at 1 to 63 (MEQINIQFPD…ETDGSIEIVT (63 aa)) folds into the TGS domain. The segment at 242 to 540 (DHRKIGKELE…LTEETKGAFP (299 aa)) is catalytic. Zn(2+) contacts are provided by cysteine 336, histidine 387, and histidine 517.

It belongs to the class-II aminoacyl-tRNA synthetase family. As to quaternary structure, homodimer. Zn(2+) serves as cofactor.

The protein resides in the cytoplasm. It catalyses the reaction tRNA(Thr) + L-threonine + ATP = L-threonyl-tRNA(Thr) + AMP + diphosphate + H(+). Its function is as follows. Catalyzes the attachment of threonine to tRNA(Thr) in a two-step reaction: L-threonine is first activated by ATP to form Thr-AMP and then transferred to the acceptor end of tRNA(Thr). Also edits incorrectly charged L-seryl-tRNA(Thr). The sequence is that of Threonine--tRNA ligase from Staphylococcus aureus (strain bovine RF122 / ET3-1).